We begin with the raw amino-acid sequence, 274 residues long: Transcriptional activator PerA (274 aa).

The HTH araC/xylS-type domain maps to Asp168 to Val265. 2 consecutive DNA-binding regions (H-T-H motif) follow at residues Gly185–Asn206 and Ile232–Tyr255.

In terms of biological role, could help in the transcriptional activator of eaeA expression in enteropathogenic E.coli. However, it seems that it is PerC which acts as an activator. The chain is Transcriptional activator PerA (perA) from Escherichia coli O127:H6 (strain E2348/69 / EPEC).